Reading from the N-terminus, the 420-residue chain is Hemocyanin 2-c chain (420 aa).

Positions 1-12 are enriched in basic residues; it reads DFGHSKKIRKNV. The interval 1 to 20 is disordered; the sequence is DFGHSKKIRKNVHSLTAEEQ. Histidine 46 provides a ligand contact to Cu cation. Cysteine 52 and cysteine 63 are disulfide-bonded. Residues histidine 66, histidine 73, histidine 185, histidine 189, and histidine 216 each contribute to the Cu cation site. Cystine bridges form between cysteine 175–cysteine 242 and cysteine 335–cysteine 342.

O-glycosylated. As to expression, hemolymph.

The protein resides in the secreted. It is found in the extracellular space. In terms of biological role, hemocyanins are copper-containing oxygen carriers occurring freely dissolved in the hemolymph of many mollusks and arthropods. This chain is Hemocyanin 2-c chain, found in Megathura crenulata (Giant keyhole limpet).